The chain runs to 785 residues: Endonuclease MutS2 (785 aa).

335–342 (GPNTGGKT) lines the ATP pocket. In terms of domain architecture, Smr spans 710 to 785 (LDLRGERYED…GNGVTIVEFK (76 aa)).

Belongs to the DNA mismatch repair MutS family. MutS2 subfamily. In terms of assembly, homodimer. Binds to stalled ribosomes, contacting rRNA.

Functionally, endonuclease that is involved in the suppression of homologous recombination and thus may have a key role in the control of bacterial genetic diversity. In terms of biological role, acts as a ribosome collision sensor, splitting the ribosome into its 2 subunits. Detects stalled/collided 70S ribosomes which it binds and splits by an ATP-hydrolysis driven conformational change. Acts upstream of the ribosome quality control system (RQC), a ribosome-associated complex that mediates the extraction of incompletely synthesized nascent chains from stalled ribosomes and their subsequent degradation. Probably generates substrates for RQC. In Listeria monocytogenes serovar 1/2a (strain ATCC BAA-679 / EGD-e), this protein is Endonuclease MutS2.